A 168-amino-acid polypeptide reads, in one-letter code: CS3 fimbrial subunit A (168 aa).

The signal sequence occupies residues M1 to A22.

In terms of processing, a longer minor form, starting at amino acid 15, has been detected by amino acid sequencing. This is probably due to alternative processing of the signal peptide.

The protein resides in the fimbrium. Its function is as follows. Fimbriae (also called pili), polar filaments radiating from the surface of the bacterium to a length of 0.5-1.5 micrometers and numbering 100-300 per cell, enable bacteria to colonize the epithelium of specific host organs. This Escherichia coli protein is CS3 fimbrial subunit A.